A 123-amino-acid chain; its full sequence is Putative C-type lectin protein FPV003/FPV258 (123 aa).

The 102-residue stretch at 21 to 122 (CRGPYTSYNN…CNATYGFVCI (102 aa)) folds into the C-type lectin domain.

The protein is Putative C-type lectin protein FPV003/FPV258 of Fowlpox virus (strain NVSL) (FPV).